The chain runs to 271 residues: MGIITNIAVQTKNPERFNVSIQKENGETLVFSVDQDVLLQFRLKKGMKIDEHSFQQIVYADEVKKTYHQALYFLSYRMRSEQEVVDYLKKKGASESIIDDVLHKLRENKYVDDREFAFAYVRTQKQTTAKGPYVIRKELEKLGVAEEWIEQSLAIYSFDEQVETAKSLYEKAKKQRAKQSLRQWKYQIGQLLYRKGFPQEVIDRVLLSERDEKEEQEWEALEYQGRKAHRRYEKYNSPMYEQKMKQALYRKGFPLEMIEQFLDKLKEGDKR.

Belongs to the RecX family.

The protein resides in the cytoplasm. In terms of biological role, modulates RecA activity. The polypeptide is Regulatory protein RecX (Geobacillus sp. (strain WCH70)).